The sequence spans 247 residues: Probable transcriptional regulatory protein MS0710 (247 aa).

The protein belongs to the TACO1 family.

It is found in the cytoplasm. The chain is Probable transcriptional regulatory protein MS0710 from Mannheimia succiniciproducens (strain KCTC 0769BP / MBEL55E).